The chain runs to 145 residues: 3-dehydroquinate dehydratase (145 aa).

Tyr-22 serves as the catalytic Proton acceptor. Residues Asn-71, His-77, and Asp-84 each contribute to the substrate site. The Proton donor role is filled by His-97. Substrate contacts are provided by residues 98 to 99 (LS) and Arg-108.

Belongs to the type-II 3-dehydroquinase family. In terms of assembly, homododecamer.

The catalysed reaction is 3-dehydroquinate = 3-dehydroshikimate + H2O. It participates in metabolic intermediate biosynthesis; chorismate biosynthesis; chorismate from D-erythrose 4-phosphate and phosphoenolpyruvate: step 3/7. In terms of biological role, catalyzes a trans-dehydration via an enolate intermediate. The polypeptide is 3-dehydroquinate dehydratase (Francisella philomiragia subsp. philomiragia (strain ATCC 25017 / CCUG 19701 / FSC 153 / O#319-036)).